The chain runs to 201 residues: Acireductone dioxygenase 2 (201 aa).

The Fe(2+) site is built by H83, H85, E89, and H129. The Ni(2+) site is built by H83, H85, E89, and H129.

The protein belongs to the acireductone dioxygenase (ARD) family. The cofactor is Fe(2+). It depends on Ni(2+) as a cofactor.

The protein resides in the cytoplasm. Its subcellular location is the nucleus. The catalysed reaction is 1,2-dihydroxy-5-(methylsulfanyl)pent-1-en-3-one + O2 = 4-methylsulfanyl-2-oxobutanoate + formate + 2 H(+). The enzyme catalyses 1,2-dihydroxy-5-(methylsulfanyl)pent-1-en-3-one + O2 = 3-(methylsulfanyl)propanoate + CO + formate + 2 H(+). Its pathway is amino-acid biosynthesis; L-methionine biosynthesis via salvage pathway; L-methionine from S-methyl-5-thio-alpha-D-ribose 1-phosphate: step 5/6. Functionally, catalyzes 2 different reactions between oxygen and the acireductone 1,2-dihydroxy-3-keto-5-methylthiopentene (DHK-MTPene) depending upon the metal bound in the active site. Fe-containing acireductone dioxygenase (Fe-ARD) produces formate and 2-keto-4-methylthiobutyrate (KMTB), the alpha-ketoacid precursor of methionine in the methionine recycle pathway. Ni-containing acireductone dioxygenase (Ni-ARD) produces methylthiopropionate, carbon monoxide and formate, and does not lie on the methionine recycle pathway. This chain is Acireductone dioxygenase 2, found in Coprinopsis cinerea (strain Okayama-7 / 130 / ATCC MYA-4618 / FGSC 9003) (Inky cap fungus).